The primary structure comprises 287 residues: Cell wall-binding protein YocH (287 aa).

A signal peptide spans 1–25; the sequence is MKKTIMSFVAVAALSTTAFGAHASA. LysM domains lie at 26-69 and 78-121; these read KEIT…KLTI and GQYT…TLSV. Low complexity predominate over residues 130 to 143; it reads TATENAQTNAPQAA. The segment at 130–193 is disordered; the sequence is TATENAQTNA…SNTNNQEASK (64 aa). Residues 165 to 181 show a composition bias toward basic and acidic residues; that stretch reads QETKAEAETSVNTEEKA. Residues 182–193 are compositionally biased toward polar residues; that stretch reads VQSNTNNQEASK.

Its subcellular location is the secreted. It localises to the cell wall. This chain is Cell wall-binding protein YocH (yocH), found in Bacillus subtilis (strain 168).